Consider the following 124-residue polypeptide: Fluoride-specific ion channel FluC (124 aa).

Helical transmembrane passes span 5–25 (VYIA…SGLV), 32–52 (SFPY…GLVM), 67–87 (FAIT…SFET), and 96–116 (LLIA…CTWI). Positions 75 and 78 each coordinate Na(+).

The protein belongs to the fluoride channel Fluc/FEX (TC 1.A.43) family.

It is found in the cell inner membrane. The enzyme catalyses fluoride(in) = fluoride(out). With respect to regulation, na(+) is not transported, but it plays an essential structural role and its presence is essential for fluoride channel function. In terms of biological role, fluoride-specific ion channel. Important for reducing fluoride concentration in the cell, thus reducing its toxicity. In Geobacter sp. (strain M21), this protein is Fluoride-specific ion channel FluC.